The following is a 302-amino-acid chain: tRNA-cytidine(32) 2-sulfurtransferase (302 aa).

Residues 44–49 (SGGKDS) carry the PP-loop motif motif. Positions 119, 122, and 210 each coordinate [4Fe-4S] cluster.

This sequence belongs to the TtcA family. Homodimer. The cofactor is Mg(2+). [4Fe-4S] cluster is required as a cofactor.

Its subcellular location is the cytoplasm. The catalysed reaction is cytidine(32) in tRNA + S-sulfanyl-L-cysteinyl-[cysteine desulfurase] + AH2 + ATP = 2-thiocytidine(32) in tRNA + L-cysteinyl-[cysteine desulfurase] + A + AMP + diphosphate + H(+). It functions in the pathway tRNA modification. Catalyzes the ATP-dependent 2-thiolation of cytidine in position 32 of tRNA, to form 2-thiocytidine (s(2)C32). The sulfur atoms are provided by the cysteine/cysteine desulfurase (IscS) system. The protein is tRNA-cytidine(32) 2-sulfurtransferase of Tolumonas auensis (strain DSM 9187 / NBRC 110442 / TA 4).